Here is a 186-residue protein sequence, read N- to C-terminus: MEVGVLSMRYAKAMIEYAQEKGVEDRLYNEFFTLSHSFRVQPGLREVLDNPVVSVKDKLALICTAADGNGESSREFVRFITLVLRNRREGYLQFISLMYLDLYRKLKHIGVGKLITAVPVDKETENRIRSAAAHILHAQMELDTVIDPSIEGGFIFDINDYRLDASIATQLKRVKQQFIDKNRRIV.

This sequence belongs to the ATPase delta chain family. F-type ATPases have 2 components, F(1) - the catalytic core - and F(0) - the membrane proton channel. F(1) has five subunits: alpha(3), beta(3), gamma(1), delta(1), epsilon(1). F(0) has three main subunits: a(1), b(2) and c(10-14). The alpha and beta chains form an alternating ring which encloses part of the gamma chain. F(1) is attached to F(0) by a central stalk formed by the gamma and epsilon chains, while a peripheral stalk is formed by the delta and b chains.

The protein resides in the cell inner membrane. Functionally, f(1)F(0) ATP synthase produces ATP from ADP in the presence of a proton or sodium gradient. F-type ATPases consist of two structural domains, F(1) containing the extramembraneous catalytic core and F(0) containing the membrane proton channel, linked together by a central stalk and a peripheral stalk. During catalysis, ATP synthesis in the catalytic domain of F(1) is coupled via a rotary mechanism of the central stalk subunits to proton translocation. In terms of biological role, this protein is part of the stalk that links CF(0) to CF(1). It either transmits conformational changes from CF(0) to CF(1) or is implicated in proton conduction. The sequence is that of ATP synthase subunit delta from Bacteroides thetaiotaomicron (strain ATCC 29148 / DSM 2079 / JCM 5827 / CCUG 10774 / NCTC 10582 / VPI-5482 / E50).